The following is a 37-amino-acid chain: Large ribosomal subunit protein bL36c (37 aa).

It belongs to the bacterial ribosomal protein bL36 family.

Its subcellular location is the plastid. The protein resides in the chloroplast. The sequence is that of Large ribosomal subunit protein bL36c from Jasminum nudiflorum (Winter jasmine).